Consider the following 128-residue polypeptide: Saitohin (128 aa).

Residues 77–128 (SYSSEESSRNGAEQGRQLSIEGPFQGQNCPSHPAAALPLPMRGESQATSCQV) form a disordered region.

As to quaternary structure, interacts with PRDX6. As to expression, highest expression in placenta, muscle, fetal brain, and adult brain, with lower expression in heart, kidney, stomach, testis, and adrenal gland. In the central nervous system, highest expression is in temporal lobe, hypothalamus, medulla and spinal cord, with lower expression in other brain regions.

The protein localises to the cytoplasm. Its subcellular location is the nucleus. The polypeptide is Saitohin (STH) (Homo sapiens (Human)).